Reading from the N-terminus, the 274-residue chain is MPFRSNNPLTRDEFLSRFFPQFHPVTTFNRGLSGGSFLIEHQGQRFVVRQPHDPDAPQSAFLRQYRALSQLPACIAPKPHLYLRDWMVVDYLPGEVKTYLPDTNELAGLLYYLHQQPRFGWRITLLPLLELYWQQSDPARRTVGWLRMLKRLRKAREPRLLRLSPLHMDVHAGNLVHSASGLKLIDWEYAGDGDIALELAAVWVENTDQHRQLVNDYATRAKIYPAQLWRQVRRWFPWLLMLKAGWFEYRWRQTGDQQFIRLADDTWRQLLIKQ.

It belongs to the thiamine kinase family.

It catalyses the reaction thiamine + ATP = thiamine phosphate + ADP + H(+). It functions in the pathway cofactor biosynthesis; thiamine diphosphate biosynthesis; thiamine phosphate from thiamine: step 1/1. Functionally, catalyzes the ATP-dependent phosphorylation of thiamine to thiamine phosphate. Is involved in thiamine salvage. The chain is Thiamine kinase from Escherichia coli O6:K15:H31 (strain 536 / UPEC).